A 268-amino-acid chain; its full sequence is Tryptophan synthase alpha chain (268 aa).

Active-site proton acceptor residues include Glu-49 and Asp-60.

The protein belongs to the TrpA family. As to quaternary structure, tetramer of two alpha and two beta chains.

The enzyme catalyses (1S,2R)-1-C-(indol-3-yl)glycerol 3-phosphate + L-serine = D-glyceraldehyde 3-phosphate + L-tryptophan + H2O. It functions in the pathway amino-acid biosynthesis; L-tryptophan biosynthesis; L-tryptophan from chorismate: step 5/5. In terms of biological role, the alpha subunit is responsible for the aldol cleavage of indoleglycerol phosphate to indole and glyceraldehyde 3-phosphate. The polypeptide is Tryptophan synthase alpha chain (Escherichia coli O7:K1 (strain IAI39 / ExPEC)).